Reading from the N-terminus, the 188-residue chain is Large ribosomal subunit protein bL9 (188 aa).

A compositionally biased stretch (basic and acidic residues) spans 149 to 170 (RSEEEAERQARGEEIGVEKEEP). The tract at residues 149–188 (RSEEEAERQARGEEIGVEKEEPSGFVEEALEETVEAPAEA) is disordered.

This sequence belongs to the bacterial ribosomal protein bL9 family.

Its function is as follows. Binds to the 23S rRNA. This Gluconacetobacter diazotrophicus (strain ATCC 49037 / DSM 5601 / CCUG 37298 / CIP 103539 / LMG 7603 / PAl5) protein is Large ribosomal subunit protein bL9.